Reading from the N-terminus, the 330-residue chain is Electron transfer flavoprotein subunit alpha (330 aa).

270–298 (LYIACGISGAIQHLAGMSNSGTIVAINKN) is an FAD binding site.

The protein belongs to the ETF alpha-subunit/FixB family. As to quaternary structure, heterodimer of an alpha and a beta subunit. The cofactor is FAD.

Its function is as follows. The electron transfer flavoprotein serves as a specific electron acceptor for other dehydrogenases. It transfers the electrons to the main respiratory chain via ETF-ubiquinone oxidoreductase (ETF dehydrogenase). In Thermoanaerobacterium thermosaccharolyticum (strain ATCC 7956 / DSM 571 / NCIMB 9385 / NCA 3814 / NCTC 13789 / WDCM 00135 / 2032) (Clostridium thermosaccharolyticum), this protein is Electron transfer flavoprotein subunit alpha (etfA).